The primary structure comprises 121 residues: Flagellar hook-basal body complex protein FliE (121 aa).

The protein belongs to the FliE family.

The protein resides in the bacterial flagellum basal body. The sequence is that of Flagellar hook-basal body complex protein FliE from Saccharophagus degradans (strain 2-40 / ATCC 43961 / DSM 17024).